We begin with the raw amino-acid sequence, 179 residues long: Large ribosomal subunit protein uL5 (179 aa).

It belongs to the universal ribosomal protein uL5 family. Part of the 50S ribosomal subunit; part of the 5S rRNA/L5/L18/L25 subcomplex. Contacts the 5S rRNA and the P site tRNA. Forms a bridge to the 30S subunit in the 70S ribosome.

This is one of the proteins that bind and probably mediate the attachment of the 5S RNA into the large ribosomal subunit, where it forms part of the central protuberance. In the 70S ribosome it contacts protein S13 of the 30S subunit (bridge B1b), connecting the 2 subunits; this bridge is implicated in subunit movement. Contacts the P site tRNA; the 5S rRNA and some of its associated proteins might help stabilize positioning of ribosome-bound tRNAs. This chain is Large ribosomal subunit protein uL5, found in Acidovorax ebreus (strain TPSY) (Diaphorobacter sp. (strain TPSY)).